Reading from the N-terminus, the 153-residue chain is Ribosome maturation factor RimP (153 aa).

The protein belongs to the RimP family.

It localises to the cytoplasm. In terms of biological role, required for maturation of 30S ribosomal subunits. This Histophilus somni (strain 2336) (Haemophilus somnus) protein is Ribosome maturation factor RimP.